A 210-amino-acid chain; its full sequence is Isochorismatase domain-containing protein 2B (210 aa).

At Lys178 the chain carries N6-succinyllysine.

It belongs to the isochorismatase family. In terms of assembly, interacts with CDKN2A. As to expression, ubiquitous. Expressed predominantly in uterus, stomach and urinary tract.

It localises to the cytoplasm. The protein resides in the nucleus. This chain is Isochorismatase domain-containing protein 2B (Isoc2b), found in Mus musculus (Mouse).